A 412-amino-acid polypeptide reads, in one-letter code: Aspartate aminotransferase, cytoplasmic (412 aa).

Alanine 2 bears the N-acetylalanine mark. 3 residues coordinate L-aspartate: glycine 38, tryptophan 140, and asparagine 194. Lysine 258 is subject to N6-(pyridoxal phosphate)lysine. Arginine 386 is a binding site for L-aspartate.

The protein belongs to the class-I pyridoxal-phosphate-dependent aminotransferase family. Homodimer. Pyridoxal 5'-phosphate serves as cofactor.

It is found in the cytoplasm. The enzyme catalyses L-aspartate + 2-oxoglutarate = oxaloacetate + L-glutamate. The catalysed reaction is L-cysteine + 2-oxoglutarate = 2-oxo-3-sulfanylpropanoate + L-glutamate. It carries out the reaction (2S)-2-aminobutanoate + 2-oxoglutarate = 2-oxobutanoate + L-glutamate. It catalyses the reaction 3-sulfino-L-alanine + 2-oxoglutarate = 3-sulfinopyruvate + L-glutamate. In terms of biological role, biosynthesis of L-glutamate from L-aspartate or L-cysteine. Important regulator of levels of glutamate, the major excitatory neurotransmitter of the vertebrate central nervous system. Acts as a scavenger of glutamate in brain neuroprotection. The aspartate aminotransferase activity is involved in hepatic glucose synthesis during development and in adipocyte glyceroneogenesis. Using L-cysteine as substrate, regulates levels of mercaptopyruvate, an important source of hydrogen sulfide. Mercaptopyruvate is converted into H(2)S via the action of 3-mercaptopyruvate sulfurtransferase (3MST). Hydrogen sulfide is an important synaptic modulator and neuroprotectant in the brain. In Gallus gallus (Chicken), this protein is Aspartate aminotransferase, cytoplasmic.